The chain runs to 259 residues: Protein-L-isoaspartate O-methyltransferase (259 aa).

Residues 1–25 (MRKRVDPPAGGRLAPGITPANSNTR) form a disordered region. The active site involves Ser107.

Belongs to the methyltransferase superfamily. L-isoaspartyl/D-aspartyl protein methyltransferase family.

Its subcellular location is the cytoplasm. It carries out the reaction [protein]-L-isoaspartate + S-adenosyl-L-methionine = [protein]-L-isoaspartate alpha-methyl ester + S-adenosyl-L-homocysteine. Its function is as follows. Catalyzes the methyl esterification of L-isoaspartyl residues in peptides and proteins that result from spontaneous decomposition of normal L-aspartyl and L-asparaginyl residues. It plays a role in the repair and/or degradation of damaged proteins. The polypeptide is Protein-L-isoaspartate O-methyltransferase (Bordetella bronchiseptica (strain ATCC BAA-588 / NCTC 13252 / RB50) (Alcaligenes bronchisepticus)).